Reading from the N-terminus, the 509-residue chain is Maturase K (509 aa).

This sequence belongs to the intron maturase 2 family. MatK subfamily.

The protein resides in the plastid. It is found in the chloroplast. Usually encoded in the trnK tRNA gene intron. Probably assists in splicing its own and other chloroplast group II introns. The polypeptide is Maturase K (Avicennia marina (Grey mangrove)).